A 71-amino-acid chain; its full sequence is Large ribosomal subunit protein bL31 (71 aa).

Zn(2+) is bound by residues C16, C18, C37, and C40.

Belongs to the bacterial ribosomal protein bL31 family. Type A subfamily. In terms of assembly, part of the 50S ribosomal subunit. Requires Zn(2+) as cofactor.

Binds the 23S rRNA. The protein is Large ribosomal subunit protein bL31 of Nitratidesulfovibrio vulgaris (strain DSM 19637 / Miyazaki F) (Desulfovibrio vulgaris).